Here is a 111-residue protein sequence, read N- to C-terminus: Nucleoid-associated protein Teth514_0034 (111 aa).

This sequence belongs to the YbaB/EbfC family. Homodimer.

It is found in the cytoplasm. It localises to the nucleoid. Its function is as follows. Binds to DNA and alters its conformation. May be involved in regulation of gene expression, nucleoid organization and DNA protection. This Thermoanaerobacter sp. (strain X514) protein is Nucleoid-associated protein Teth514_0034.